An 840-amino-acid chain; its full sequence is Lon protease homolog 2, peroxisomal (840 aa).

In terms of domain architecture, Lon N-terminal spans 13–222 (LPLLCTHDGV…KALPLLTRQI (210 aa)). An ATP-binding site is contributed by 375-382 (GPPGVGKT). The interval 583 to 606 (QKVSRSEAPTEQHAEQNTDSKVED) is disordered. Over residues 584–606 (KVSRSEAPTEQHAEQNTDSKVED) the composition is skewed to basic and acidic residues. Positions 641–825 (LTLPGVAIGL…DEVLNAAFDG (185 aa)) constitute a Lon proteolytic domain. Catalysis depends on residues Ser-731 and Lys-774. Residues 838 to 840 (SKL) carry the Microbody targeting signal motif.

It belongs to the peptidase S16 family.

It is found in the peroxisome matrix. It carries out the reaction Hydrolysis of proteins in presence of ATP.. In terms of biological role, ATP-dependent serine protease that mediates the selective degradation of misfolded and unassembled polypeptides in the peroxisomal matrix. Necessary for type 2 peroxisome targeting signal (PTS2)-containing protein processing and facilitates peroxisome matrix protein import. The sequence is that of Lon protease homolog 2, peroxisomal (lonp2) from Danio rerio (Zebrafish).